Reading from the N-terminus, the 124-residue chain is Fluoride-specific ion channel FluC (124 aa).

The next 4 helical transmembrane spans lie at 4–24 (LLFV…MSII), 35–55 (FGTL…YALG), 62–82 (PELK…FSTF), and 95–115 (WFKS…MVYL). 2 residues coordinate Na(+): G74 and T77.

The protein belongs to the fluoride channel Fluc/FEX (TC 1.A.43) family.

The protein localises to the cell inner membrane. The enzyme catalyses fluoride(in) = fluoride(out). Na(+) is not transported, but it plays an essential structural role and its presence is essential for fluoride channel function. Its function is as follows. Fluoride-specific ion channel. Important for reducing fluoride concentration in the cell, thus reducing its toxicity. The chain is Fluoride-specific ion channel FluC from Shewanella denitrificans (strain OS217 / ATCC BAA-1090 / DSM 15013).